Reading from the N-terminus, the 169-residue chain is Ribosome maturation factor RimM (169 aa).

A PRC barrel domain is found at 97–169; the sequence is EDEYYWADLV…TITADWGLDY (73 aa).

The protein belongs to the RimM family. Binds ribosomal protein uS19.

The protein localises to the cytoplasm. An accessory protein needed during the final step in the assembly of 30S ribosomal subunit, possibly for assembly of the head region. Essential for efficient processing of 16S rRNA. May be needed both before and after RbfA during the maturation of 16S rRNA. It has affinity for free ribosomal 30S subunits but not for 70S ribosomes. The polypeptide is Ribosome maturation factor RimM (Neisseria gonorrhoeae (strain ATCC 700825 / FA 1090)).